A 398-amino-acid chain; its full sequence is Chalcone synthase 1 (398 aa).

Position 58-65 (58-65) interacts with CoA; sequence KFKRMCDK. The Acyl-thioester intermediate role is filled by Cys-167. Residues Thr-200 and 219–220 each bind substrate; that span reads GD. A CoA-binding site is contributed by Ala-311.

The protein belongs to the thiolase-like superfamily. Chalcone/stilbene synthases family. As to quaternary structure, homodimer.

The enzyme catalyses (E)-4-coumaroyl-CoA + 3 malonyl-CoA + 3 H(+) = 2',4,4',6'-tetrahydroxychalcone + 3 CO2 + 4 CoA. The protein operates within secondary metabolite biosynthesis; flavonoid biosynthesis. The primary product of this enzyme is 4,2',4',6'-tetrahydroxychalcone (also termed naringenin-chalcone or chalcone) which can under specific conditions spontaneously isomerize into naringenin. The protein is Chalcone synthase 1 (CHS1) of Oryza sativa subsp. japonica (Rice).